The sequence spans 305 residues: Homeobox protein ceh-23 (305 aa).

Disordered regions lie at residues 113–140 and 262–305; these read ASCP…ERRR and RRSK…KVLN. Residues 120 to 135 show a composition bias toward polar residues; that stretch reads ASSQATVTLQVPSTGS. Positions 211–270 form a DNA-binding region, homeobox; it reads HRKARTIYGTTQTQQLEDMFKGQMYVVGAERENLAQRLGLSPSQVRIWFQNRRSKHRRKQ. A compositionally biased stretch (acidic residues) spans 287-305; sequence GKDEEEDDEEDEDDVKVLN.

This sequence belongs to the distal-less homeobox family.

Its subcellular location is the nucleus. In terms of biological role, probable transcription factor. Required for differentiation of AIY interneurons, acting downstream of LIM/homeobox protein ttx-3. Modulates gene expression, acting downstream of AMP kinase aak-2/AMPK signaling. Modulates lifespan. The sequence is that of Homeobox protein ceh-23 (ceh-23) from Caenorhabditis elegans.